Here is a 341-residue protein sequence, read N- to C-terminus: Retinol dehydrogenase 10-B (341 aa).

Residues 3-23 form a helical; Signal-anchor membrane-spanning segment; it reads IVLEFFLVTFRVLWAFVLAAA. Residue 40–64 participates in NADP(+) binding; that stretch reads LITGAGSGLGRLFALEFARRRAQLV. Residue Ser197 coordinates substrate. The active-site Proton acceptor is Tyr210.

The protein belongs to the short-chain dehydrogenases/reductases (SDR) family.

The protein localises to the microsome membrane. It localises to the endoplasmic reticulum membrane. It catalyses the reaction all-trans-retinol + NADP(+) = all-trans-retinal + NADPH + H(+). It participates in cofactor metabolism; retinol metabolism. Its function is as follows. Retinol dehydrogenase with a clear preference for NADP. Converts all-trans-retinol to all-trans-retinal. Has no detectable activity towards 11-cis-retinol, 9-cis-retinol and 13-cis-retinol. The protein is Retinol dehydrogenase 10-B (rdh10-b) of Xenopus laevis (African clawed frog).